Reading from the N-terminus, the 187-residue chain is Troponin I, slow skeletal muscle (187 aa).

Residue proline 2 is modified to N-acetylproline. The interval 2–48 (PEVERKPKITASRKLLLKSLMLAKAKECWEQEHEEREAEKVRYLAER) is involved in binding TNC. Serine 58 carries the phosphoserine modification. The tract at residues 97–118 (LKLKVMDLRGKFKRPPLRRVRV) is involved in binding TNC and actin.

The protein belongs to the troponin I family. As to quaternary structure, binds to actin and tropomyosin. In terms of tissue distribution, highest levels observed in human skeletal muscle (e.g. gastrocnemious muscle), differentiated cultures of primary human muscle cells and rhabdomyosarcoma cells cultured in low serum medium. Expressed in C2 muscle cell myoblasts and myotubes.

Troponin I is the inhibitory subunit of troponin, the thin filament regulatory complex which confers calcium-sensitivity to striated muscle actomyosin ATPase activity. The chain is Troponin I, slow skeletal muscle (TNNI1) from Homo sapiens (Human).